We begin with the raw amino-acid sequence, 236 residues long: Adenosine 5'-phosphosulfate reductase (236 aa).

4 residues coordinate [4Fe-4S] cluster: cysteine 122, cysteine 123, cysteine 205, and cysteine 208. Residue cysteine 231 is the Nucleophile; cysteine thiosulfonate intermediate of the active site.

The protein belongs to the PAPS reductase family. CysH subfamily. The cofactor is [4Fe-4S] cluster.

It localises to the cytoplasm. The enzyme catalyses [thioredoxin]-disulfide + sulfite + AMP + 2 H(+) = adenosine 5'-phosphosulfate + [thioredoxin]-dithiol. It participates in sulfur metabolism; hydrogen sulfide biosynthesis; sulfite from sulfate. Catalyzes the formation of sulfite from adenosine 5'-phosphosulfate (APS) using thioredoxin as an electron donor. This is Adenosine 5'-phosphosulfate reductase from Mycolicibacterium smegmatis (strain ATCC 700084 / mc(2)155) (Mycobacterium smegmatis).